We begin with the raw amino-acid sequence, 339 residues long: DNA-directed RNA polymerase subunit alpha (339 aa).

The segment at 1-233 is alpha N-terminal domain (alpha-NTD); it reads MVREEVAGST…DLFLPFLHAE (233 aa). The tract at residues 266-339 is alpha C-terminal domain (alpha-CTD); that stretch reads GIPLNCIFID…IDLLKNKLSF (74 aa).

It belongs to the RNA polymerase alpha chain family. In terms of assembly, in plastids the minimal PEP RNA polymerase catalytic core is composed of four subunits: alpha, beta, beta', and beta''. When a (nuclear-encoded) sigma factor is associated with the core the holoenzyme is formed, which can initiate transcription.

The protein localises to the plastid. The protein resides in the chloroplast. It carries out the reaction RNA(n) + a ribonucleoside 5'-triphosphate = RNA(n+1) + diphosphate. Functionally, DNA-dependent RNA polymerase catalyzes the transcription of DNA into RNA using the four ribonucleoside triphosphates as substrates. The chain is DNA-directed RNA polymerase subunit alpha from Hordeum bulbosum (Bulbous barley).